A 315-amino-acid chain; its full sequence is Transaldolase (315 aa).

K125 functions as the Schiff-base intermediate with substrate in the catalytic mechanism.

It belongs to the transaldolase family. Type 1 subfamily. Homodimer.

It localises to the cytoplasm. It catalyses the reaction D-sedoheptulose 7-phosphate + D-glyceraldehyde 3-phosphate = D-erythrose 4-phosphate + beta-D-fructose 6-phosphate. It participates in carbohydrate degradation; pentose phosphate pathway; D-glyceraldehyde 3-phosphate and beta-D-fructose 6-phosphate from D-ribose 5-phosphate and D-xylulose 5-phosphate (non-oxidative stage): step 2/3. Transaldolase is important for the balance of metabolites in the pentose-phosphate pathway. In Polaromonas sp. (strain JS666 / ATCC BAA-500), this protein is Transaldolase.